The chain runs to 294 residues: Cell division protein FtsQ (294 aa).

The Cytoplasmic segment spans residues 1–26 (MARGPNRRRVDRVPGERRRRLARAMA). Residues 27-49 (LALPSILALAALGGAATLGWRVG) traverse the membrane as a helical segment. Residues 50–294 (WKSDLLRVRE…GPQGRSSSLR (245 aa)) lie on the Periplasmic side of the membrane. In terms of domain architecture, POTRA spans 55–123 (LRVREIRFEG…PALEVQLAER (69 aa)). Residues 266–294 (AGRRGEPDGRSSYAAGGGGGPQGRSSSLR) are disordered.

This sequence belongs to the FtsQ/DivIB family. FtsQ subfamily.

It is found in the cell inner membrane. Essential cell division protein. The protein is Cell division protein FtsQ of Anaeromyxobacter sp. (strain K).